Reading from the N-terminus, the 348-residue chain is Protein RecA (348 aa).

67–74 (GPESSGKT) is an ATP binding site.

It belongs to the RecA family.

The protein resides in the cytoplasm. Can catalyze the hydrolysis of ATP in the presence of single-stranded DNA, the ATP-dependent uptake of single-stranded DNA by duplex DNA, and the ATP-dependent hybridization of homologous single-stranded DNAs. It interacts with LexA causing its activation and leading to its autocatalytic cleavage. The sequence is that of Protein RecA from Clostridioides difficile (strain 630) (Peptoclostridium difficile).